Consider the following 141-residue polypeptide: Hemoglobin subunit alpha (141 aa).

In terms of domain architecture, Globin spans 1 to 141; it reads VLSPADKSNV…VSTVLVSKYR (141 aa). Serine 3 carries the phosphoserine modification. N6-succinyllysine is present on residues lysine 7 and lysine 11. Lysine 16 carries the N6-acetyllysine; alternate modification. The residue at position 16 (lysine 16) is an N6-succinyllysine; alternate. At tyrosine 24 the chain carries Phosphotyrosine. Serine 35 bears the Phosphoserine mark. Lysine 40 bears the N6-succinyllysine mark. Position 49 is a phosphoserine (serine 49). Histidine 58 contributes to the O2 binding site. Histidine 87 lines the heme b pocket. Residue serine 102 is modified to Phosphoserine. A Phosphothreonine modification is found at threonine 108. Serine 124 carries the post-translational modification Phosphoserine. Position 134 is a phosphothreonine (threonine 134). A Phosphoserine modification is found at serine 138.

The protein belongs to the globin family. In terms of assembly, heterotetramer of two alpha chains and two beta chains. As to expression, red blood cells.

In terms of biological role, involved in oxygen transport from the lung to the various peripheral tissues. Functionally, hemopressin acts as an antagonist peptide of the cannabinoid receptor CNR1. Hemopressin-binding efficiently blocks cannabinoid receptor CNR1 and subsequent signaling. In Chalinolobus morio (Chocolate-wattled bat), this protein is Hemoglobin subunit alpha (HBA).